We begin with the raw amino-acid sequence, 338 residues long: Phosphate transport system permease protein PstC 1 (338 aa).

8 helical membrane-spanning segments follow: residues 19-39 (GGIGAVIPLLALVLVLVVLVI), 93-113 (TSAIALIIAVPVSVGAALVIV), 123-143 (AVGIVLELLAGIPSVVVGLWG), 144-164 (AMTFGPFIAHHIAPVIAHNAP), 181-201 (GMLVSGLVLAVMVVPIIATTT), 232-252 (LPWVSSGIVGAVVLGLGRALG), 254-274 (TMAVAMVSGAVLGAMPANIYA), and 295-315 (TNFAVKTLAEVGLVLMVITLL). One can recognise an ABC transmembrane type-1 domain in the interval 87–320 (IVGTLATSAI…VITLLTNVAA (234 aa)).

The protein belongs to the binding-protein-dependent transport system permease family. CysTW subfamily.

The protein resides in the cell membrane. In terms of biological role, part of the binding-protein-dependent transport system for phosphate; probably responsible for the translocation of the substrate across the membrane. This Mycobacterium bovis (strain ATCC BAA-935 / AF2122/97) protein is Phosphate transport system permease protein PstC 1 (pstC1).